Consider the following 208-residue polypeptide: Probable Brix domain-containing ribosomal biogenesis protein (208 aa).

Residues 1–196 enclose the Brix domain; that stretch reads MMLITTSHRP…IWIMEDGRRW (196 aa).

Functionally, probably involved in the biogenesis of the ribosome. The polypeptide is Probable Brix domain-containing ribosomal biogenesis protein (Thermococcus kodakarensis (strain ATCC BAA-918 / JCM 12380 / KOD1) (Pyrococcus kodakaraensis (strain KOD1))).